A 148-amino-acid polypeptide reads, in one-letter code: Large ribosomal subunit protein bL9 (148 aa).

It belongs to the bacterial ribosomal protein bL9 family.

In terms of biological role, binds to the 23S rRNA. In Streptomyces avermitilis (strain ATCC 31267 / DSM 46492 / JCM 5070 / NBRC 14893 / NCIMB 12804 / NRRL 8165 / MA-4680), this protein is Large ribosomal subunit protein bL9.